The following is an 832-amino-acid chain: Histone acetyltransferase KAT2B (832 aa).

The span at 1-22 shows a compositional bias: gly residues; it reads MSEAGGAGPGGCGAGAGAGAGP. 2 disordered regions span residues 1 to 54 and 395 to 436; these read MSEA…ACGP and SYNS…DSHV. Residues 24–39 show a composition bias toward pro residues; sequence ALPPQPAALPPAPPQG. Residues 40–54 are compositionally biased toward low complexity; that stretch reads SPCAAAAGGSGACGP. Residues 395–413 are compositionally biased toward polar residues; that stretch reads SYNSTSSSLEQPNAGSSSP. The segment covering 425–436 has biased composition (basic and acidic residues); it reads PGEKRKMTDSHV. One can recognise an N-acetyltransferase domain in the interval 503–651; sequence LNQKPNKKIL…GATLMGCELN (149 aa). Glutamate 570 acts as the Proton donor/acceptor in catalysis. Acetyl-CoA is bound by residues 574–576, 581–587, and 612–615; these read CAV, QVKGYGT, and YAIG. Positions 706-725 are disordered; it reads IRETGWKPSGKEKSKEPRDP. Over residues 714–725 the composition is skewed to basic and acidic residues; the sequence is SGKEKSKEPRDP. The Bromo domain occupies 723–827; the sequence is RDPDQLYSTL…KFFFSKIKEA (105 aa).

This sequence belongs to the acetyltransferase family. GCN5 subfamily. Interacts with SIRT1. Interacts (unsumoylated form) with NR2C1; the interaction promotes transactivation activity. Interacts with EP300, CREBBP and DDX17. Interacts with NCOA1 and NCOA3. Component of a large chromatin remodeling complex, at least composed of MYSM1, KAT2B/PCAF, RBM10 and KIF11/TRIP5. Interacts with NR2C2 (hypophosphorylated and unsumoylated form); the interaction promotes the transactivation activity of NR2C2. Interacts with KLF1; the interaction does not acetylate KLF1 and there is no enhancement of its transactivational activity. Interacts with NFE4. Interacts with MECOM. Interacts with E2F1; the interaction acetylates E2F1 augmenting its DNA-binding and transcriptional activity. Interacts with NPAS2, BMAL1 and CLOCK. Interacts with BCAS3. Interacts with CEBPB. Interacts with NR4A3. Interacts with NFATC2. Interacts with TBX5. Interacts with PLK4. Interacts with RB1; this interaction leads to RB1 acetylation. Interacts with VRK1. As to quaternary structure, (Microbial infection) Interacts with and acetylates HIV-1 Tat. In terms of assembly, (Microbial infection) Interacts with HTLV-1 Tax. In terms of tissue distribution, ubiquitously expressed but most abundant in heart and skeletal muscle. Also expressed in the skin, in keratinocytes (at protein level).

The protein resides in the nucleus. The protein localises to the cytoplasm. Its subcellular location is the cytoskeleton. It is found in the microtubule organizing center. It localises to the centrosome. The enzyme catalyses L-lysyl-[histone] + acetyl-CoA = N(6)-acetyl-L-lysyl-[histone] + CoA + H(+). The catalysed reaction is L-lysyl-[protein] + acetyl-CoA = N(6)-acetyl-L-lysyl-[protein] + CoA + H(+). It carries out the reaction spermidine + acetyl-CoA = N(8)-acetylspermidine + CoA + H(+). Activated in vitro by very low concentrations of spermidine, but inhibited at spermidine concentrations higher than 4 uM. The activating effect of low spermidine concentrations may be mediated by N(8)-acetylspermidine produced by KAT2B/P/CAF itself acting as a positive feedback loop. Functions as a histone acetyltransferase (HAT) to promote transcriptional activation. Has significant histone acetyltransferase activity with core histones (H3 and H4), and also with nucleosome core particles. Has a a strong preference for acetylation of H3 at 'Lys-9' (H3K9ac). Also acetylates non-histone proteins, such as ACLY, MAPRE1/EB1, PLK4, RRP9/U3-55K and TBX5. Inhibits cell-cycle progression and counteracts the mitogenic activity of the adenoviral oncoprotein E1A. Acts as a circadian transcriptional coactivator which enhances the activity of the circadian transcriptional activators: NPAS2-BMAL1 and CLOCK-BMAL1 heterodimers. Involved in heart and limb development by mediating acetylation of TBX5, acetylation regulating nucleocytoplasmic shuttling of TBX5. Acts as a negative regulator of centrosome amplification by mediating acetylation of PLK4. Acetylates RRP9/U3-55K, a core subunit of the U3 snoRNP complex, impairing pre-rRNA processing. Acetylates MAPRE1/EB1, promoting dynamic kinetochore-microtubule interactions in early mitosis. Also acetylates spermidine. In terms of biological role, (Microbial infection) In case of HIV-1 infection, it is recruited by the viral protein Tat. Regulates Tat's transactivating activity and may help inducing chromatin remodeling of proviral genes. This chain is Histone acetyltransferase KAT2B, found in Homo sapiens (Human).